Consider the following 462-residue polypeptide: Sugar transporter ERD6-like 2 (462 aa).

The next 12 helical transmembrane spans lie at 23-43, 70-90, 96-116, 123-143, 156-176, 178-198, 261-281, 296-316, 324-344, 357-377, 397-417, and 423-443; these read SGLL…GCAM, VMTL…ALVG, WISD…HDII, LFLG…IAEI, NQLL…FFHW, TLAL…FFIP, LIIG…AISA, IGTT…MLTV, LLMI…LSYY, VMLI…LGGL, LVTM…NFMI, and GTYF…WTLV.

This sequence belongs to the major facilitator superfamily. Sugar transporter (TC 2.A.1.1) family.

It is found in the membrane. In terms of biological role, sugar transporter. The chain is Sugar transporter ERD6-like 2 (SUGTL3) from Arabidopsis thaliana (Mouse-ear cress).